A 218-amino-acid chain; its full sequence is 23 kDa integral membrane protein (218 aa).

The Cytoplasmic segment spans residues 1-12 (MATLGTGMRCLK). A helical transmembrane segment spans residues 13–36 (SCVFILNIICLLCSLVLIGAGAYV). The Extracellular segment spans residues 37–55 (EVKFSQYEANLHKVWQAAP). The helical transmembrane segment at 56-71 (IAIIVVGVVILIVSFL) threads the bilayer. At 72–82 (GCCGAIKENVC) the chain is on the cytoplasmic side. A helical transmembrane segment spans residues 83-108 (MLYMYAFFLIVLLIAELVAAIVAVVY). At 109 to 183 (KDKIDDEINT…SVFSAFLKRN (75 aa)) the chain is on the extracellular side. Residues 184-205 (LIIVACVAFGVCFFQLLSIVIA) traverse the membrane as a helical segment. Residues 206–218 (CCLGQRIHDYQNV) lie on the Cytoplasmic side of the membrane.

The protein belongs to the tetraspanin (TM4SF) family.

Its subcellular location is the membrane. The protein is 23 kDa integral membrane protein of Schistosoma japonicum (Blood fluke).